The chain runs to 573 residues: 2-succinyl-5-enolpyruvyl-6-hydroxy-3-cyclohexene-1-carboxylate synthase (573 aa).

The protein belongs to the TPP enzyme family. MenD subfamily. As to quaternary structure, homodimer. Requires Mg(2+) as cofactor. The cofactor is Mn(2+). Thiamine diphosphate serves as cofactor.

It carries out the reaction isochorismate + 2-oxoglutarate + H(+) = 5-enolpyruvoyl-6-hydroxy-2-succinyl-cyclohex-3-ene-1-carboxylate + CO2. Its pathway is quinol/quinone metabolism; 1,4-dihydroxy-2-naphthoate biosynthesis; 1,4-dihydroxy-2-naphthoate from chorismate: step 2/7. It participates in quinol/quinone metabolism; menaquinone biosynthesis. Its function is as follows. Catalyzes the thiamine diphosphate-dependent decarboxylation of 2-oxoglutarate and the subsequent addition of the resulting succinic semialdehyde-thiamine pyrophosphate anion to isochorismate to yield 2-succinyl-5-enolpyruvyl-6-hydroxy-3-cyclohexene-1-carboxylate (SEPHCHC). The polypeptide is 2-succinyl-5-enolpyruvyl-6-hydroxy-3-cyclohexene-1-carboxylate synthase (Shewanella baltica (strain OS195)).